Reading from the N-terminus, the 354-residue chain is Methionine import ATP-binding protein MetN (354 aa).

The ABC transporter domain occupies 8–250 (LDHIDITFRQ…PKEALTQEFI (243 aa)). ATP is bound at residue 42 to 49 (GYSGAGKS).

The protein belongs to the ABC transporter superfamily. Methionine importer (TC 3.A.1.24) family. The complex is composed of two ATP-binding proteins (MetN), two transmembrane proteins (MetI) and a solute-binding protein (MetQ).

It is found in the cell membrane. The enzyme catalyses L-methionine(out) + ATP + H2O = L-methionine(in) + ADP + phosphate + H(+). It carries out the reaction D-methionine(out) + ATP + H2O = D-methionine(in) + ADP + phosphate + H(+). Part of the ABC transporter complex MetNIQ involved in methionine import. Responsible for energy coupling to the transport system. In Streptococcus pyogenes serotype M12 (strain MGAS2096), this protein is Methionine import ATP-binding protein MetN.